The primary structure comprises 207 residues: Imidazole glycerol phosphate synthase subunit HisH (207 aa).

One can recognise a Glutamine amidotransferase type-1 domain in the interval 1-207 (MIGIIDYGMG…KRFGQLVEGN (207 aa)). The active-site Nucleophile is C79. Active-site residues include H185 and E187.

In terms of assembly, heterodimer of HisH and HisF.

The protein resides in the cytoplasm. It carries out the reaction 5-[(5-phospho-1-deoxy-D-ribulos-1-ylimino)methylamino]-1-(5-phospho-beta-D-ribosyl)imidazole-4-carboxamide + L-glutamine = D-erythro-1-(imidazol-4-yl)glycerol 3-phosphate + 5-amino-1-(5-phospho-beta-D-ribosyl)imidazole-4-carboxamide + L-glutamate + H(+). The enzyme catalyses L-glutamine + H2O = L-glutamate + NH4(+). It functions in the pathway amino-acid biosynthesis; L-histidine biosynthesis; L-histidine from 5-phospho-alpha-D-ribose 1-diphosphate: step 5/9. IGPS catalyzes the conversion of PRFAR and glutamine to IGP, AICAR and glutamate. The HisH subunit catalyzes the hydrolysis of glutamine to glutamate and ammonia as part of the synthesis of IGP and AICAR. The resulting ammonia molecule is channeled to the active site of HisF. The polypeptide is Imidazole glycerol phosphate synthase subunit HisH (Shouchella clausii (strain KSM-K16) (Alkalihalobacillus clausii)).